The chain runs to 227 residues: Ribosomal RNA small subunit methyltransferase G (227 aa).

Residues Gly69, Phe74, 119–120, and Arg134 contribute to the S-adenosyl-L-methionine site; that span reads VE.

This sequence belongs to the methyltransferase superfamily. RNA methyltransferase RsmG family.

The protein localises to the cytoplasm. Functionally, specifically methylates the N7 position of a guanine in 16S rRNA. The polypeptide is Ribosomal RNA small subunit methyltransferase G (Mycoplasmopsis pulmonis (strain UAB CTIP) (Mycoplasma pulmonis)).